A 432-amino-acid polypeptide reads, in one-letter code: Adenylosuccinate synthetase (432 aa).

GTP-binding positions include 13–19 (GDEGKGK) and 41–43 (GHT). The active-site Proton acceptor is the D14. Mg(2+)-binding residues include D14 and G41. Residues 14-17 (DEGK), 39-42 (NAGH), T130, R144, Q225, T240, and R304 each bind IMP. Residue H42 is the Proton donor of the active site. Position 300–306 (300–306 (ATTGRRR)) interacts with substrate. GTP is bound by residues R306, 332–334 (KLD), and 415–417 (STG).

Belongs to the adenylosuccinate synthetase family. As to quaternary structure, homodimer. It depends on Mg(2+) as a cofactor.

It localises to the cytoplasm. It carries out the reaction IMP + L-aspartate + GTP = N(6)-(1,2-dicarboxyethyl)-AMP + GDP + phosphate + 2 H(+). Its pathway is purine metabolism; AMP biosynthesis via de novo pathway; AMP from IMP: step 1/2. Plays an important role in the de novo pathway of purine nucleotide biosynthesis. Catalyzes the first committed step in the biosynthesis of AMP from IMP. This is Adenylosuccinate synthetase from Pectobacterium atrosepticum (strain SCRI 1043 / ATCC BAA-672) (Erwinia carotovora subsp. atroseptica).